The chain runs to 200 residues: Small ribosomal subunit protein mS26 (200 aa).

The transit peptide at 1–27 directs the protein to the mitochondrion; the sequence is MLRALNRLAARPGGQPPTLLLLPVRGR. Lys159 bears the N6-acetyllysine mark.

It belongs to the mitochondrion-specific ribosomal protein mS26 family. In terms of assembly, component of the mitochondrial ribosome small subunit (28S) which comprises a 12S rRNA and about 30 distinct proteins.

Its subcellular location is the mitochondrion. The protein is Small ribosomal subunit protein mS26 (Mrps26) of Rattus norvegicus (Rat).